We begin with the raw amino-acid sequence, 31 residues long: Cytochrome b6-f complex subunit 6 (31 aa).

Residues Ile4 to Gly24 traverse the membrane as a helical segment.

This sequence belongs to the PetL family. In terms of assembly, the 4 large subunits of the cytochrome b6-f complex are cytochrome b6, subunit IV (17 kDa polypeptide, PetD), cytochrome f and the Rieske protein, while the 4 small subunits are PetG, PetL, PetM and PetN. The complex functions as a dimer.

The protein resides in the plastid. It localises to the chloroplast thylakoid membrane. In terms of biological role, component of the cytochrome b6-f complex, which mediates electron transfer between photosystem II (PSII) and photosystem I (PSI), cyclic electron flow around PSI, and state transitions. PetL is important for photoautotrophic growth as well as for electron transfer efficiency and stability of the cytochrome b6-f complex. This Physcomitrium patens (Spreading-leaved earth moss) protein is Cytochrome b6-f complex subunit 6.